We begin with the raw amino-acid sequence, 151 residues long: Small heat shock protein HspH (151 aa).

In terms of domain architecture, sHSP spans 28-138; it reads RAGEDNYPPY…KPRRIAINAA (111 aa).

It belongs to the small heat shock protein (HSP20) family.

The chain is Small heat shock protein HspH (hspH) from Bradyrhizobium diazoefficiens (strain JCM 10833 / BCRC 13528 / IAM 13628 / NBRC 14792 / USDA 110).